The sequence spans 48 residues: uncharacterized protein (48 aa).

Positions 1 to 30 (MLGRTKLGNRNAQANNNAKKKNGFQTHFDS) are disordered.

This is an uncharacterized protein from Bacillus subtilis (strain 168).